The following is a 678-amino-acid chain: Dihydroxyacetone phosphate acyltransferase (678 aa).

Phosphoserine is present on residues serine 12 and serine 17. The short motif at histidine 161 to aspartate 166 is the HXXXXD motif element. Lysine 641 is modified (N6-acetyllysine). The Microbody targeting signal signature appears at alanine 676 to leucine 678.

The protein belongs to the GPAT/DAPAT family. In terms of assembly, part of a heterotrimeric complex composed of GNPAT, AGPS and a modified form of GNPAT. In terms of tissue distribution, highly expressed in liver and testis. Lower levels in heart, brain, lung and kidney. Detected in spleen.

It is found in the peroxisome membrane. It catalyses the reaction dihydroxyacetone phosphate + an acyl-CoA = a 1-acylglycerone 3-phosphate + CoA. The enzyme catalyses dihydroxyacetone phosphate + hexadecanoyl-CoA = 1-hexadecanoylglycerone 3-phosphate + CoA. It functions in the pathway membrane lipid metabolism; glycerophospholipid metabolism. Functionally, dihydroxyacetonephosphate acyltransferase catalyzing the first step in the biosynthesis of plasmalogens, a subset of phospholipids that differ from other glycerolipids by having an alkyl chain attached through a vinyl ether linkage at the sn-1 position of the glycerol backbone, and which unique physical properties have an impact on various aspects of cell signaling and membrane biology. The polypeptide is Dihydroxyacetone phosphate acyltransferase (Mus musculus (Mouse)).